Here is a 146-residue protein sequence, read N- to C-terminus: 3-dehydroquinate dehydratase (146 aa).

Tyrosine 23 serves as the catalytic Proton acceptor. Substrate contacts are provided by asparagine 74, histidine 80, and aspartate 87. Histidine 100 (proton donor) is an active-site residue. Residues 101–102 and arginine 111 each bind substrate; that span reads IS.

This sequence belongs to the type-II 3-dehydroquinase family. As to quaternary structure, homododecamer.

The catalysed reaction is 3-dehydroquinate = 3-dehydroshikimate + H2O. It participates in metabolic intermediate biosynthesis; chorismate biosynthesis; chorismate from D-erythrose 4-phosphate and phosphoenolpyruvate: step 3/7. In terms of biological role, catalyzes a trans-dehydration via an enolate intermediate. This chain is 3-dehydroquinate dehydratase, found in Bacillus cereus (strain AH820).